Reading from the N-terminus, the 1472-residue chain is ABC multidrug transporter atrI (1472 aa).

The disordered stretch occupies residues 1-28 (MRRSNVVPVHSLTSSTNTGRDSRGEKYD). Residues 134 to 384 (FRRETWNFRN…FERQGWFCPP (251 aa)) enclose the ABC transporter 1 domain. 4 N-linked (GlcNAc...) asparagine glycosylation sites follow: asparagine 143, asparagine 277, asparagine 308, and asparagine 332. A run of 7 helical transmembrane segments spans residues 506–526 (ILAL…AGFY), 530–550 (ATLF…INSL), 580–600 (IPVK…LSGL), 605–625 (SQFF…SAVF), 639–659 (MTLA…VVPV), 664–684 (PWFK…ILIA), and 744–764 (FGIL…ATEL). Positions 784–793 (AHLKNGHEPG) are enriched in basic and acidic residues. The disordered stretch occupies residues 784 to 821 (AHLKNGHEPGADEEAGAGKTVVSSSAEENKQDQGITSI). Polar residues predominate over residues 804-821 (VVSSSAEENKQDQGITSI). In terms of domain architecture, ABC transporter 2 spans 828-1070 (FTWRDVVYDI…TLLKYFESHG (243 aa)). 864 to 871 (GVSGAGKT) is an ATP binding site. The next 6 helical transmembrane spans lie at 1168-1188 (YIAA…FSFF), 1204-1224 (VFML…LFIT), 1244-1264 (FMIA…ILVF), 1282-1302 (LVLL…DFVI), 1309-1329 (ETAG…NGVM), and 1337-1357 (GFWI…GMAA). Residue asparagine 1402 is glycosylated (N-linked (GlcNAc...) asparagine). The chain crosses the membrane as a helical span at residues 1433-1453 (FGIFWAYVVFDIAVAVMLYYC). Asparagine 1460 carries an N-linked (GlcNAc...) asparagine glycan.

It belongs to the ABC transporter superfamily. ABCG family. PDR (TC 3.A.1.205) subfamily.

The protein resides in the cell membrane. The catalysed reaction is itraconazole(in) + ATP + H2O = itraconazole(out) + ADP + phosphate + H(+). The enzyme catalyses voriconazole(in) + ATP + H2O = voriconazole(out) + ADP + phosphate + H(+). It catalyses the reaction fluconazole(in) + ATP + H2O = fluconazole(out) + ADP + phosphate + H(+). Its function is as follows. Pleiotropic ABC efflux transporter involved in the basal level of azole susceptibility. Confers resistance to fluconazole, itraconazole and voriconazole. The protein is ABC multidrug transporter atrI of Aspergillus fumigatus (strain ATCC MYA-4609 / CBS 101355 / FGSC A1100 / Af293) (Neosartorya fumigata).